Here is a 341-residue protein sequence, read N- to C-terminus: Heat-inducible transcription repressor HrcA (341 aa).

It belongs to the HrcA family.

Its function is as follows. Negative regulator of class I heat shock genes (grpE-dnaK-dnaJ and groELS operons). Prevents heat-shock induction of these operons. This chain is Heat-inducible transcription repressor HrcA, found in Leptothrix cholodnii (strain ATCC 51168 / LMG 8142 / SP-6) (Leptothrix discophora (strain SP-6)).